The primary structure comprises 93 residues: Mitochondrial import inner membrane translocase subunit Tim10-A (93 aa).

The Twin CX3C motif signature appears at 32–57 (CHKKCVPPHYKEAELSKGESVCLDRC). 2 cysteine pairs are disulfide-bonded: Cys-32/Cys-57 and Cys-36/Cys-53.

The protein belongs to the small Tim family. Heterohexamer; composed of 3 copies of TIMM9 and 3 copies of TIMM10/TIM10A, named soluble 70 kDa complex. The complex forms a 6-bladed alpha-propeller structure and associates with the TIMM22 component of the TIM22 complex. Interacts with multi-pass transmembrane proteins in transit.

It is found in the mitochondrion inner membrane. Its function is as follows. Mitochondrial intermembrane chaperone that participates in the import and insertion of multi-pass transmembrane proteins into the mitochondrial inner membrane. May also be required for the transfer of beta-barrel precursors from the TOM complex to the sorting and assembly machinery (SAM complex) of the outer membrane. Acts as a chaperone-like protein that protects the hydrophobic precursors from aggregation and guide them through the mitochondrial intermembrane space. This chain is Mitochondrial import inner membrane translocase subunit Tim10-A (timm10-a), found in Xenopus laevis (African clawed frog).